Consider the following 392-residue polypeptide: O-phospho-L-seryl-tRNA:Cys-tRNA synthase 2 (392 aa).

Residues 85–86 (AR), Asn190, and 213–215 (SGH) each bind pyridoxal 5'-phosphate. Lys216 carries the N6-(pyridoxal phosphate)lysine modification.

Belongs to the SepCysS family. Homodimer. Interacts with SepRS. Pyridoxal 5'-phosphate serves as cofactor.

It catalyses the reaction O-phospho-L-seryl-tRNA(Cys) + hydrogen sulfide + H(+) = L-cysteinyl-tRNA(Cys) + phosphate. In terms of biological role, converts O-phospho-L-seryl-tRNA(Cys) (Sep-tRNA(Cys)) to L-cysteinyl-tRNA(Cys) (Cys-tRNA(Cys)). The sequence is that of O-phospho-L-seryl-tRNA:Cys-tRNA synthase 2 from Methanocorpusculum labreanum (strain ATCC 43576 / DSM 4855 / Z).